A 914-amino-acid chain; its full sequence is Calcium-activated chloride channel regulator 1 (914 aa).

The signal sequence occupies residues methionine 1–serine 21. The metalloprotease domain stretch occupies residues aspartate 46–lysine 199. Histidine 156 is a binding site for Zn(2+). Residue glutamate 157 is part of the active site. Zn(2+) contacts are provided by histidine 160 and aspartate 167. Positions isoleucine 306–leucine 475 constitute a VWFA domain. Asparagine 503, asparagine 585, asparagine 770, asparagine 804, asparagine 810, asparagine 831, asparagine 836, and asparagine 890 each carry an N-linked (GlcNAc...) asparagine glycan.

This sequence belongs to the CLCR family. Post-translationally, glycosylated. The 125-kDa product is autoproteolytically processed by the metalloprotease domain and yields to two cell-surface-associated subunits, a 90-kDa protein and a group of 37- to 41-kDa proteins. The cleavage is necessary for calcium-activated chloride channel (CaCC) activation activity. Highly expressed in small intestine and colon namely in intestinal basal crypt epithelia and goblet cells, and appendix. Weakly expressed in uterus, testis and kidney. Expressed in the airways epithelium of both asthmatic and healthy patients. Expressed in the bronchial epithelium, especially in mucus-producing goblet cells. Expressed in normal turbinate mucosa and nasal polyp. Expressed in.

The protein localises to the secreted. It localises to the extracellular space. It is found in the cell membrane. Its function is as follows. May be involved in mediating calcium-activated chloride conductance. May play critical roles in goblet cell metaplasia, mucus hypersecretion, cystic fibrosis and AHR. May be involved in the regulation of mucus production and/or secretion by goblet cells. Involved in the regulation of tissue inflammation in the innate immune response. May play a role as a tumor suppressor. Induces MUC5AC. The protein is Calcium-activated chloride channel regulator 1 (CLCA1) of Homo sapiens (Human).